Reading from the N-terminus, the 407-residue chain is Arginine deiminase (407 aa).

The active-site Amidino-cysteine intermediate is cysteine 397.

Belongs to the arginine deiminase family.

The protein localises to the cytoplasm. It catalyses the reaction L-arginine + H2O = L-citrulline + NH4(+). It participates in amino-acid degradation; L-arginine degradation via ADI pathway; carbamoyl phosphate from L-arginine: step 1/2. The polypeptide is Arginine deiminase (Vibrio parahaemolyticus serotype O3:K6 (strain RIMD 2210633)).